The chain runs to 335 residues: NmrA-like family domain-containing oxidoreductase ptmS (335 aa).

NADP(+) is bound by residues 12-17 (GATGNQ), 39-43 (RDPNS), 60-61 (DG), 81-88 (INSDDPVF), K139, and 163-166 (FLEN). The interaction with ASS1 stretch occupies residues 161–206 (GYFLENFLFKQGAFIMGGFPWETDAEGYLTWKVPYWGGEEQIPFLS).

The protein belongs to the NmrA-type oxidoreductase family.

Its pathway is secondary metabolite biosynthesis. NmrA-like family domain-containing oxidoreductase; part of the gene cluster that mediates the biosynthesis of the indole diterpenes penitrems. The geranylgeranyl diphosphate (GGPP) synthase ptmG catalyzes the first step in penitrem biosynthesis via conversion of farnesyl pyrophosphate and isopentyl pyrophosphate into geranylgeranyl pyrophosphate (GGPP). Condensation of indole-3-glycerol phosphate with GGPP by the prenyl transferase ptmC then forms 3-geranylgeranylindole (3-GGI). Epoxidation by the FAD-dependent monooxygenase ptmM leads to a epoxidized-GGI that is substrate of the terpene cyclase ptmB for cyclization to yield paspaline. Paspaline is subsequently converted to 13-desoxypaxilline by the cytochrome P450 monooxygenase ptmP, the latter being then converted to paxilline by the cytochrome P450 monooxygenase ptmQ. Paxilline is converted to beta-paxitriol via C-10 ketoreduction by the short-chain dehydrogenase ptmH which can be monoprenylated at the C-20 by the indole diterpene prenyltransferase ptmD. A two-step elimination (acetylation and elimination) process performed by the O-acetyltransferase ptmV and ptmI leads to the production of the prenylated form of penijanthine. The FAD-linked oxidoreductase ptmO then converts the prenylated form of penijanthine into PC-M5 which is in turn transformed into PC-M4 by the aromatic dimethylallyltransferase ptmE. Five sequential oxidative transformations performed by the cytochrome P450 monooxygenases ptmK, ptmU, ptmL, ptmN and ptmJ yield the various penitrem compounds. PtmK, ptmU and ptmM are involved in the formation of the key bicyclic ring of penitrem C via the formation of the intermediates secopenitrem D and penitrem D. PtmL catalyzes the epoxidation of penitrem D and C to yield penitrem B and F, respectively. PtmJ catalyzes the last benzylic hydroxylation to convert penitrem B to prenitrem E and penitrem F to penitrem A. This is NmrA-like family domain-containing oxidoreductase ptmS from Penicillium ochrochloron.